The chain runs to 564 residues: MFS-type transporter kojT (564 aa).

N-linked (GlcNAc...) asparagine glycosylation occurs at Asn-113. 12 helical membrane-spanning segments follow: residues 120–140 (WATL…SSID), 159–179 (SLAT…AAPF), 187–207 (PVYI…GLAP), 217–237 (FLAG…MADI), 249–269 (VCCT…AFIG), 278–298 (WTEW…FLFV), 353–373 (IMVA…FGFL), 389–409 (GSVG…FAMV), 437–457 (LWFA…MGWT), 462–482 (ISYW…QGIF), 500–520 (ALVS…IVSI), and 530–550 (WSLT…YIFY).

Belongs to the major facilitator superfamily.

The protein localises to the cell membrane. Its function is as follows. MFS-type transporter; part of the gene cluster that mediates the biosynthesis of 5-hydroxy-2-hydroxymethyl-1,4-pyrone, also know as kojic acid, a by-product in the fermentation process of malting rice that acts as a chelation agent. Involved in the seretion of kojic acid. The polypeptide is MFS-type transporter kojT (Aspergillus flavus (strain ATCC 200026 / FGSC A1120 / IAM 13836 / NRRL 3357 / JCM 12722 / SRRC 167)).